A 265-amino-acid polypeptide reads, in one-letter code: Capsule polysaccharide export inner-membrane protein CtrC (265 aa).

Transmembrane regions (helical) follow at residues 37–57 (IGFL…VLMW), 67–84 (TLNI…LMMW), 121–141 (IAGA…IGWI), 148–168 (FYML…GLVI), 178–198 (FGKI…AFFF), and 238–258 (WYIV…VSKF). The ABC transmembrane type-2 domain occupies 37 to 258 (IGFLWLFVEP…LFGLAMVSKF (222 aa)).

This sequence belongs to the ABC-2 integral membrane protein family.

The protein localises to the cell inner membrane. Functionally, may form an ATP-driven capsule polysaccharide export apparatus, in association with the CtrB and CtrD proteins. The polypeptide is Capsule polysaccharide export inner-membrane protein CtrC (ctrC) (Neisseria meningitidis serogroup B (strain ATCC BAA-335 / MC58)).